A 315-amino-acid chain; its full sequence is L-lactate dehydrogenase (315 aa).

Residues Val-16, Asp-37, and 81–82 each bind NAD(+); that span reads GA. Substrate-binding positions include Gln-84, Arg-90, and 122 to 125; that span reads NPVD. Residues 120–122 and Ser-145 each bind NAD(+); that span reads VSN. Residue 150 to 153 participates in substrate binding; that stretch reads DTAR. Beta-D-fructose 1,6-bisphosphate contacts are provided by Arg-155 and His-170. His-177 serves as the catalytic Proton acceptor. Tyr-224 carries the phosphotyrosine modification. Thr-233 lines the substrate pocket.

Belongs to the LDH/MDH superfamily. LDH family. Homotetramer.

It localises to the cytoplasm. The enzyme catalyses (S)-lactate + NAD(+) = pyruvate + NADH + H(+). It functions in the pathway fermentation; pyruvate fermentation to lactate; (S)-lactate from pyruvate: step 1/1. Its activity is regulated as follows. Allosterically activated by fructose 1,6-bisphosphate (FBP). Its function is as follows. Catalyzes the conversion of lactate to pyruvate. This Treponema denticola (strain ATCC 35405 / DSM 14222 / CIP 103919 / JCM 8153 / KCTC 15104) protein is L-lactate dehydrogenase.